The primary structure comprises 104 residues: Protein P-30 (104 aa).

A Pyrrolidone carboxylic acid modification is found at Gln1. The Proton acceptor role is filled by His10. Disulfide bonds link Cys19-Cys68, Cys30-Cys75, Cys48-Cys90, and Cys87-Cys104. Position 31–35 (31–35) interacts with substrate; that stretch reads KDKNT. Catalysis depends on His97, which acts as the Proton donor.

This sequence belongs to the pancreatic ribonuclease family.

Basic protein with antiproliferative/cytotoxic activity against several tumor cell lines in vitro, as well as antitumor in vivo. It exhibits a ribonuclease-like activity against high molecular weight ribosomal RNA. This is Protein P-30 from Lithobates pipiens (Northern leopard frog).